We begin with the raw amino-acid sequence, 345 residues long: Dimethyladenosine transferase 1, mitochondrial (345 aa).

Residues methionine 1–leucine 27 constitute a mitochondrion transit peptide. Positions 38, 63, 85, 86, 111, 112, and 141 each coordinate S-adenosyl-L-methionine.

The protein belongs to the class I-like SAM-binding methyltransferase superfamily. rRNA adenine N(6)-methyltransferase family. KsgA subfamily. As to quaternary structure, interacts with mitochondrial RNA polymerase POLRMT. Interacts with TFAM. Bound to the maturing mtSSU until the late stages of assembly.

It localises to the mitochondrion. It carries out the reaction adenosine(N)/adenosine(N+1) in rRNA + 4 S-adenosyl-L-methionine = N(6)-dimethyladenosine(N)/N(6)-dimethyladenosine(N+1) in rRNA + 4 S-adenosyl-L-homocysteine + 4 H(+). Mitochondrial methyltransferase which uses S-adenosyl methionine to dimethylate two highly conserved adjacent adenosine residues (A1583 and A1584) within the loop of helix 45 at the 3-prime end of 12S rRNA, thereby regulating the assembly or stability of the small subunit of the mitochondrial ribosome. Also required for basal transcription of mitochondrial DNA, probably via its interaction with POLRMT and TFAM. Stimulates transcription independently of the methyltransferase activity. The polypeptide is Dimethyladenosine transferase 1, mitochondrial (TFB1M) (Macaca fascicularis (Crab-eating macaque)).